A 236-amino-acid chain; its full sequence is Probable ascorbate-specific transmembrane electron transporter 2 (236 aa).

The Cytoplasmic portion of the chain corresponds to 1–11; sequence MAAGLGVKAAP. The chain crosses the membrane as a helical span at residues 12–32; the sequence is FTYVAHALAVAAAVMVLVWCI. Residues 15–219 form the Cytochrome b561 domain; that stretch reads VAHALAVAAA…FGAAVVVAAV (205 aa). The Extracellular portion of the chain corresponds to 33–53; it reads SFRGGLAFEADNKNLIFNVHP. A heme b-binding site is contributed by H52. The helical transmembrane segment at 54–74 threads the bilayer; the sequence is VLMLIGYIILGSEAIMIYKIF. 67–75 lines the L-ascorbate pocket; sequence AIMIYKIFP. Residues 75 to 84 lie on the Cytoplasmic side of the membrane; it reads PKLNHDTTKL. The chain crosses the membrane as a helical span at residues 85–105; it reads IHLILHAIAIVLGAVGIYCAF. Residues H86 and H120 each coordinate heme b. Residues 106–122 are Extracellular-facing; the sequence is KFHNESGIANLYSLHSW. 116–125 contacts monodehydro-L-ascorbate radical; it reads LYSLHSWLGI. The helical transmembrane segment at 123 to 143 threads the bilayer; it reads LGIGTISLYGIQWIFGFVAFF. Topologically, residues 144–153 are cytoplasmic; it reads YPGAAPHVRR. A helical transmembrane segment spans residues 154–174; sequence GALPWHVLFGLFVYVLTLATA. H159 contributes to the heme b binding site. Residues 175 to 196 lie on the Extracellular side of the membrane; the sequence is ELGLLEKLTFLQSSGLDKYGAE. The chain crosses the membrane as a helical span at residues 197–217; that stretch reads AFLVNFTGLVVALFGAAVVVA. Over 218 to 236 the chain is Cytoplasmic; that stretch reads AVAPAHVEEPEGYAPIPVN.

Heme b serves as cofactor.

Its subcellular location is the membrane. Two-heme-containing cytochrome. Catalyzes ascorbate-dependent trans-membrane electron transfer by utilizing a concerted H(+)/e(-) transfer mechanism. The protein is Probable ascorbate-specific transmembrane electron transporter 2 of Oryza sativa subsp. japonica (Rice).